The following is a 209-amino-acid chain: Leucyl/phenylalanyl-tRNA--protein transferase (209 aa).

The protein belongs to the L/F-transferase family.

It is found in the cytoplasm. It carries out the reaction N-terminal L-lysyl-[protein] + L-leucyl-tRNA(Leu) = N-terminal L-leucyl-L-lysyl-[protein] + tRNA(Leu) + H(+). The catalysed reaction is N-terminal L-arginyl-[protein] + L-leucyl-tRNA(Leu) = N-terminal L-leucyl-L-arginyl-[protein] + tRNA(Leu) + H(+). The enzyme catalyses L-phenylalanyl-tRNA(Phe) + an N-terminal L-alpha-aminoacyl-[protein] = an N-terminal L-phenylalanyl-L-alpha-aminoacyl-[protein] + tRNA(Phe). Functionally, functions in the N-end rule pathway of protein degradation where it conjugates Leu, Phe and, less efficiently, Met from aminoacyl-tRNAs to the N-termini of proteins containing an N-terminal arginine or lysine. The polypeptide is Leucyl/phenylalanyl-tRNA--protein transferase (Paramagnetospirillum magneticum (strain ATCC 700264 / AMB-1) (Magnetospirillum magneticum)).